Here is a 90-residue protein sequence, read N- to C-terminus: Cell division topological specificity factor (90 aa).

It belongs to the MinE family.

Prevents the cell division inhibition by proteins MinC and MinD at internal division sites while permitting inhibition at polar sites. This ensures cell division at the proper site by restricting the formation of a division septum at the midpoint of the long axis of the cell. In Francisella philomiragia subsp. philomiragia (strain ATCC 25017 / CCUG 19701 / FSC 153 / O#319-036), this protein is Cell division topological specificity factor.